Consider the following 131-residue polypeptide: MSMTDPIADMLTRVRNAHHAEKADVRMPSSKLKRAIAAVLQEEGYIEGYREVGEEKKPVLEVTLRYHEGQPAIREIQRYSRPGLRVYRGRDELPRVRNGLGTAIISTSKGVMSDGQARAQGHGGEVLCWVF.

The protein belongs to the universal ribosomal protein uS8 family. In terms of assembly, part of the 30S ribosomal subunit. Contacts proteins S5 and S12.

Functionally, one of the primary rRNA binding proteins, it binds directly to 16S rRNA central domain where it helps coordinate assembly of the platform of the 30S subunit. The sequence is that of Small ribosomal subunit protein uS8 from Halorhodospira halophila (strain DSM 244 / SL1) (Ectothiorhodospira halophila (strain DSM 244 / SL1)).